The chain runs to 207 residues: Large ribosomal subunit protein uL4 (207 aa).

The interval 49-78 is disordered; that stretch reads HAVKNRSAVSGGGRKPWRQKGTGRARQGSI.

This sequence belongs to the universal ribosomal protein uL4 family. As to quaternary structure, part of the 50S ribosomal subunit.

In terms of biological role, one of the primary rRNA binding proteins, this protein initially binds near the 5'-end of the 23S rRNA. It is important during the early stages of 50S assembly. It makes multiple contacts with different domains of the 23S rRNA in the assembled 50S subunit and ribosome. Forms part of the polypeptide exit tunnel. This chain is Large ribosomal subunit protein uL4, found in Streptococcus agalactiae serotype Ia (strain ATCC 27591 / A909 / CDC SS700).